A 143-amino-acid chain; its full sequence is Peptide methionine sulfoxide reductase MsrB (143 aa).

The MsrB domain occupies Asp-16–Arg-139. Positions 55, 58, 104, and 107 each coordinate Zn(2+). Cys-128 (nucleophile) is an active-site residue.

The protein belongs to the MsrB Met sulfoxide reductase family. It depends on Zn(2+) as a cofactor.

It carries out the reaction L-methionyl-[protein] + [thioredoxin]-disulfide + H2O = L-methionyl-(R)-S-oxide-[protein] + [thioredoxin]-dithiol. This Burkholderia cenocepacia (strain HI2424) protein is Peptide methionine sulfoxide reductase MsrB.